Consider the following 640-residue polypeptide: Chaperone protein DnaK (640 aa).

The residue at position 198 (T198) is a Phosphothreonine; by autocatalysis. Residues 600–640 are disordered; the sequence is KTQGAGAEGGEQPHGEQEAGGAAKGEKVVDADFEEVKDDKK. Positions 630–640 are enriched in acidic residues; that stretch reads ADFEEVKDDKK.

Belongs to the heat shock protein 70 family.

Its function is as follows. Acts as a chaperone. The sequence is that of Chaperone protein DnaK from Citrifermentans bemidjiense (strain ATCC BAA-1014 / DSM 16622 / JCM 12645 / Bem) (Geobacter bemidjiensis).